Reading from the N-terminus, the 430-residue chain is Inner membrane transport protein YbaT (430 aa).

The Cytoplasmic segment spans residues methionine 1–glycine 14. Residues leucine 15 to leucine 35 form a helical membrane-spanning segment. The Periplasmic segment spans residues glycine 36–alanine 38. Residues alanine 39 to phenylalanine 59 form a helical membrane-spanning segment. Residues serine 60–glycine 88 lie on the Cytoplasmic side of the membrane. The helical transmembrane segment at valine 89 to valine 109 threads the bilayer. The Periplasmic segment spans residues alanine 110–glutamate 128. Residues histidine 129–serine 149 traverse the membrane as a helical segment. Topologically, residues asparagine 150–glutamate 157 are cytoplasmic. The chain crosses the membrane as a helical span at residues valine 158–serine 178. At leucine 179–serine 192 the chain is on the periplasmic side. A helical membrane pass occupies residues glycine 193–alanine 213. Over asparagine 214 to arginine 228 the chain is Cytoplasmic. Residues alanine 229 to leucine 249 form a helical membrane-spanning segment. Residues serine 250–leucine 272 are Periplasmic-facing. A helical transmembrane segment spans residues leucine 273–isoleucine 293. Topologically, residues asparagine 294–serine 325 are cytoplasmic. The chain crosses the membrane as a helical span at residues threonine 326 to glycine 346. Residue serine 347 is a topological domain, periplasmic. The chain crosses the membrane as a helical span at residues leucine 348–isoleucine 368. Over arginine 369 to proline 379 the chain is Cytoplasmic. The chain crosses the membrane as a helical span at residues isoleucine 380–tryptophan 400. Residues serine 401–glycine 403 are Periplasmic-facing. A helical membrane pass occupies residues serine 404–methionine 424. The Cytoplasmic portion of the chain corresponds to lysine 425–valine 430.

This sequence belongs to the amino acid-polyamine-organocation (APC) superfamily.

The protein localises to the cell inner membrane. Probable amino-acid or metabolite transport protein. In Escherichia coli (strain K12), this protein is Inner membrane transport protein YbaT (ybaT).